The primary structure comprises 295 residues: Zinc finger CCCH domain-containing protein 44 (295 aa).

Positions 1-31 (MEAGGGKRAAPEGTNGAAKRARASESSQVGV) are disordered. 2 consecutive C3H1-type zinc fingers follow at residues 32-60 (GSKLKPCTKFFSTSGCPFGSSCHFLHNFP) and 98-126 (SVKTRMCNKYNTAEGCKWGSKCHFAHGER). One can recognise a KH domain in the interval 166 to 230 (SATAKISVDA…DQIKHASAMV (65 aa)). The segment at 259 to 286 (NFKTKLCENFNKGSCTFGDRCHFAHGES) adopts a C3H1-type 3 zinc-finger fold.

The chain is Zinc finger CCCH domain-containing protein 44 from Oryza sativa subsp. japonica (Rice).